A 94-amino-acid chain; its full sequence is Putative pterin-4-alpha-carbinolamine dehydratase (94 aa).

The protein belongs to the pterin-4-alpha-carbinolamine dehydratase family.

The enzyme catalyses (4aS,6R)-4a-hydroxy-L-erythro-5,6,7,8-tetrahydrobiopterin = (6R)-L-erythro-6,7-dihydrobiopterin + H2O. This chain is Putative pterin-4-alpha-carbinolamine dehydratase, found in Chloroflexus aggregans (strain MD-66 / DSM 9485).